The sequence spans 431 residues: Adenylosuccinate synthetase (431 aa).

GTP-binding positions include 12-18 (GDEGKGK) and 40-42 (GHT). The active-site Proton acceptor is the aspartate 13. The Mg(2+) site is built by aspartate 13 and glycine 40. IMP contacts are provided by residues 13 to 16 (DEGK), 38 to 41 (NAGH), threonine 130, arginine 144, glutamine 225, threonine 240, and arginine 304. Residue histidine 41 is the Proton donor of the active site. Residue 300–306 (ATTGRPR) participates in substrate binding. GTP is bound by residues arginine 306, 332–334 (KLD), and 414–416 (SVG).

Belongs to the adenylosuccinate synthetase family. In terms of assembly, homodimer. Requires Mg(2+) as cofactor.

The protein resides in the cytoplasm. It carries out the reaction IMP + L-aspartate + GTP = N(6)-(1,2-dicarboxyethyl)-AMP + GDP + phosphate + 2 H(+). It functions in the pathway purine metabolism; AMP biosynthesis via de novo pathway; AMP from IMP: step 1/2. In terms of biological role, plays an important role in the de novo pathway of purine nucleotide biosynthesis. Catalyzes the first committed step in the biosynthesis of AMP from IMP. The protein is Adenylosuccinate synthetase of Geotalea uraniireducens (strain Rf4) (Geobacter uraniireducens).